The primary structure comprises 245 residues: Orotidine 5'-phosphate decarboxylase (245 aa).

Substrate is bound by residues Asp-22, Lys-44, 71–80, Thr-131, Arg-192, Gln-201, Gly-221, and Arg-222; that span reads DLKFHDIPNT. Residue Lys-73 is the Proton donor of the active site.

The protein belongs to the OMP decarboxylase family. Type 1 subfamily. In terms of assembly, homodimer.

The catalysed reaction is orotidine 5'-phosphate + H(+) = UMP + CO2. It participates in pyrimidine metabolism; UMP biosynthesis via de novo pathway; UMP from orotate: step 2/2. In terms of biological role, catalyzes the decarboxylation of orotidine 5'-monophosphate (OMP) to uridine 5'-monophosphate (UMP). The polypeptide is Orotidine 5'-phosphate decarboxylase (Shigella flexneri serotype 5b (strain 8401)).